The sequence spans 505 residues: tRNA-2-methylthio-N(6)-dimethylallyladenosine synthase (505 aa).

The segment at 1–39 (MGQKAKAQAPTTHPRPHTLSSQVAPALPRRPRHAAPESL) is disordered. One can recognise an MTTase N-terminal domain in the interval 47-162 (MKAHLITYGC…IGAALESNER (116 aa)). Residues Cys-56, Cys-92, Cys-125, Cys-194, Cys-198, and Cys-201 each coordinate [4Fe-4S] cluster. Residues 180–413 (PSGKLQAHLT…IARQKDWSAR (234 aa)) enclose the Radical SAM core domain. Residues 416–479 (AQKVGTVQQV…PHMMYGHILG (64 aa)) enclose the TRAM domain.

The protein belongs to the methylthiotransferase family. MiaB subfamily. In terms of assembly, monomer. [4Fe-4S] cluster serves as cofactor.

Its subcellular location is the cytoplasm. The catalysed reaction is N(6)-dimethylallyladenosine(37) in tRNA + (sulfur carrier)-SH + AH2 + 2 S-adenosyl-L-methionine = 2-methylsulfanyl-N(6)-dimethylallyladenosine(37) in tRNA + (sulfur carrier)-H + 5'-deoxyadenosine + L-methionine + A + S-adenosyl-L-homocysteine + 2 H(+). In terms of biological role, catalyzes the methylthiolation of N6-(dimethylallyl)adenosine (i(6)A), leading to the formation of 2-methylthio-N6-(dimethylallyl)adenosine (ms(2)i(6)A) at position 37 in tRNAs that read codons beginning with uridine. In Deinococcus radiodurans (strain ATCC 13939 / DSM 20539 / JCM 16871 / CCUG 27074 / LMG 4051 / NBRC 15346 / NCIMB 9279 / VKM B-1422 / R1), this protein is tRNA-2-methylthio-N(6)-dimethylallyladenosine synthase.